The chain runs to 371 residues: Cytochrome b (371 aa).

A run of 4 helical transmembrane segments spans residues F25–I45, W69–I90, W105–L125, and F170–I190. Heme b-binding residues include H75 and H89. Residues H174 and H188 each contribute to the heme b site. Residue H193 coordinates a ubiquinone. The next 4 membrane-spanning stretches (helical) occupy residues Y218 to T238, L280 to H300, L312 to S332, and F339 to P358.

This sequence belongs to the cytochrome b family. As to quaternary structure, the cytochrome bc1 complex contains 3 respiratory subunits (MT-CYB, CYC1 and UQCRFS1), 2 core proteins (UQCRC1 and UQCRC2) and probably 6 low-molecular weight proteins. Requires heme b as cofactor.

The protein resides in the mitochondrion inner membrane. Functionally, component of the ubiquinol-cytochrome c reductase complex (complex III or cytochrome b-c1 complex) that is part of the mitochondrial respiratory chain. The b-c1 complex mediates electron transfer from ubiquinol to cytochrome c. Contributes to the generation of a proton gradient across the mitochondrial membrane that is then used for ATP synthesis. The chain is Cytochrome b (MT-CYB) from Sinomicrurus macclellandi (Macclelland's coral snake).